The chain runs to 507 residues: ATP synthase subunit alpha, chloroplastic (507 aa).

ATP is bound at residue 170–177 (GDRQTGKT). T257 is modified (phosphothreonine).

It belongs to the ATPase alpha/beta chains family. In terms of assembly, F-type ATPases have 2 components, CF(1) - the catalytic core - and CF(0) - the membrane proton channel. CF(1) has five subunits: alpha(3), beta(3), gamma(1), delta(1), epsilon(1). CF(0) has four main subunits: a, b, b' and c.

Its subcellular location is the plastid. The protein localises to the chloroplast thylakoid membrane. It carries out the reaction ATP + H2O + 4 H(+)(in) = ADP + phosphate + 5 H(+)(out). Its function is as follows. Produces ATP from ADP in the presence of a proton gradient across the membrane. The alpha chain is a regulatory subunit. The sequence is that of ATP synthase subunit alpha, chloroplastic from Lepidium virginicum (Virginia pepperweed).